Here is an 85-residue protein sequence, read N- to C-terminus: Small ribosomal subunit protein bS20 (85 aa).

It belongs to the bacterial ribosomal protein bS20 family.

In terms of biological role, binds directly to 16S ribosomal RNA. The sequence is that of Small ribosomal subunit protein bS20 from Borrelia hermsii (strain HS1 / DAH).